Reading from the N-terminus, the 525-residue chain is COP9 signalosome complex subunit 1b (525 aa).

The 163-residue stretch at 298 to 460 (HFLNANFDHC…KILFAKEADQ (163 aa)) folds into the PCI domain.

Belongs to the CSN1 family. In terms of assembly, component of the CSN complex, probably composed of CSN1b, alien/CSN2, CSN3, CSN4, CSN5, CSN6, CSN7 and CSN8.

Its subcellular location is the cytoplasm. The protein localises to the nucleus. Functionally, essential component of the COP9 signalosome complex (CSN), a complex involved in various cellular and developmental processes. The CSN complex is an essential regulator of the ubiquitin (Ubl) conjugation pathway by mediating the deneddylation of the cullin subunits of the SCF-type E3 ligase complexes, leading to decrease the Ubl ligase activity of SCF. The CSN complex plays an essential role in oogenesis and embryogenesis and is required for proper photoreceptor R cell differentiation and promote lamina glial cell migration or axon targeting. It also promotes Ubl-dependent degradation of cyclin E (CycE) during early oogenesis. The polypeptide is COP9 signalosome complex subunit 1b (CSN1b) (Drosophila melanogaster (Fruit fly)).